Here is a 318-residue protein sequence, read N- to C-terminus: Thymidylate synthase (318 aa).

Residues Arg-25 and 180–181 contribute to the dUMP site; that span reads RR. Cys-200 serves as the catalytic Nucleophile. DUMP-binding positions include 220-223, Asn-231, and 261-263; these read RSGD and HIY. Asp-223 serves as a coordination point for (6R)-5,10-methylene-5,6,7,8-tetrahydrofolate. A (6R)-5,10-methylene-5,6,7,8-tetrahydrofolate-binding site is contributed by Ala-317.

The protein belongs to the thymidylate synthase family. Bacterial-type ThyA subfamily. As to quaternary structure, homodimer.

The protein resides in the cytoplasm. It catalyses the reaction dUMP + (6R)-5,10-methylene-5,6,7,8-tetrahydrofolate = 7,8-dihydrofolate + dTMP. It functions in the pathway pyrimidine metabolism; dTTP biosynthesis. In terms of biological role, catalyzes the reductive methylation of 2'-deoxyuridine-5'-monophosphate (dUMP) to 2'-deoxythymidine-5'-monophosphate (dTMP) while utilizing 5,10-methylenetetrahydrofolate (mTHF) as the methyl donor and reductant in the reaction, yielding dihydrofolate (DHF) as a by-product. This enzymatic reaction provides an intracellular de novo source of dTMP, an essential precursor for DNA biosynthesis. This is Thymidylate synthase from Bacillus cereus (strain ATCC 14579 / DSM 31 / CCUG 7414 / JCM 2152 / NBRC 15305 / NCIMB 9373 / NCTC 2599 / NRRL B-3711).